A 344-amino-acid chain; its full sequence is Putative voltage-gated potassium channel subunit beta (344 aa).

Residues tryptophan 33, aspartate 62, tyrosine 67, serine 167, glutamine 193, tryptophan 222, serine 223, proline 224, leucine 225, lysine 233, arginine 243, glycine 301, serine 303, glutamine 307, glutamate 310, and asparagine 311 each contribute to the NADP(+) site. The active-site Proton donor/acceptor is tyrosine 67.

Belongs to the shaker potassium channel beta subunit family. As to quaternary structure, forms heteromultimeric complexes with potassium channel alpha subunits.

Its subcellular location is the cytoplasm. It localises to the nucleus. Functionally, probable accessory potassium channel protein which modulates the activity of the pore-forming alpha subunit. This Schizosaccharomyces pombe (strain 972 / ATCC 24843) (Fission yeast) protein is Putative voltage-gated potassium channel subunit beta.